The chain runs to 243 residues: uncharacterized protein (243 aa).

This sequence belongs to the ycf23 family.

It is found in the plastid. The protein resides in the cyanelle. This is an uncharacterized protein from Cyanophora paradoxa.